Here is a 331-residue protein sequence, read N- to C-terminus: Lipoyl synthase (331 aa).

The [4Fe-4S] cluster site is built by Cys-74, Cys-79, Cys-85, Cys-100, Cys-104, Cys-107, and Ser-314. Positions 85–303 (CFGKGTATFM…ETEAYKMGFT (219 aa)) constitute a Radical SAM core domain.

This sequence belongs to the radical SAM superfamily. Lipoyl synthase family. It depends on [4Fe-4S] cluster as a cofactor.

The protein localises to the cytoplasm. It catalyses the reaction [[Fe-S] cluster scaffold protein carrying a second [4Fe-4S](2+) cluster] + N(6)-octanoyl-L-lysyl-[protein] + 2 oxidized [2Fe-2S]-[ferredoxin] + 2 S-adenosyl-L-methionine + 4 H(+) = [[Fe-S] cluster scaffold protein] + N(6)-[(R)-dihydrolipoyl]-L-lysyl-[protein] + 4 Fe(3+) + 2 hydrogen sulfide + 2 5'-deoxyadenosine + 2 L-methionine + 2 reduced [2Fe-2S]-[ferredoxin]. The protein operates within protein modification; protein lipoylation via endogenous pathway; protein N(6)-(lipoyl)lysine from octanoyl-[acyl-carrier-protein]: step 2/2. Its function is as follows. Catalyzes the radical-mediated insertion of two sulfur atoms into the C-6 and C-8 positions of the octanoyl moiety bound to the lipoyl domains of lipoate-dependent enzymes, thereby converting the octanoylated domains into lipoylated derivatives. In Leptothrix cholodnii (strain ATCC 51168 / LMG 8142 / SP-6) (Leptothrix discophora (strain SP-6)), this protein is Lipoyl synthase.